A 205-amino-acid chain; its full sequence is Peptidyl-tRNA hydrolase (205 aa).

Tyrosine 14 lines the tRNA pocket. Histidine 19 (proton acceptor) is an active-site residue. Tyrosine 64, asparagine 66, and asparagine 112 together coordinate tRNA.

Belongs to the PTH family. Monomer.

It localises to the cytoplasm. The enzyme catalyses an N-acyl-L-alpha-aminoacyl-tRNA + H2O = an N-acyl-L-amino acid + a tRNA + H(+). Functionally, hydrolyzes ribosome-free peptidyl-tRNAs (with 1 or more amino acids incorporated), which drop off the ribosome during protein synthesis, or as a result of ribosome stalling. Its function is as follows. Catalyzes the release of premature peptidyl moieties from peptidyl-tRNA molecules trapped in stalled 50S ribosomal subunits, and thus maintains levels of free tRNAs and 50S ribosomes. In Parvibaculum lavamentivorans (strain DS-1 / DSM 13023 / NCIMB 13966), this protein is Peptidyl-tRNA hydrolase.